Consider the following 306-residue polypeptide: MWFKNLLIYRLTQDLPVDAEALEAAMATKLARPCASQELTTYGFVAPFGKGEDAPLVHVSGDFLLIAARKEERILPGSVVRDALKEKVEEIEAEQMRKVYKKERDQIKDEIIQAFLPRAFIRRSSTFAAIAPKQGLILVNSASPKRAEDLLSTLREVIGTLPVRPLTVKTAPTAIMTDWVTTQKPADDFFVLDECELRDTHEDGGIVRCKRQDLTSEEIQLHLTTGKVVTQLSLAWQDKLSFMLDDKMTVKRLKFEDLLQDQAEQDGGEEALGQLDASFTLMMLTFGDFLPALVEALGGEETPQGI.

This sequence belongs to the RdgC family.

It localises to the cytoplasm. Its subcellular location is the nucleoid. In terms of biological role, may be involved in recombination. The chain is Recombination-associated protein RdgC from Pseudomonas fluorescens (strain SBW25).